The following is a 171-amino-acid chain: 3-hydroxydecanoyl-[acyl-carrier-protein] dehydratase (171 aa).

Residue His71 is part of the active site.

Belongs to the thioester dehydratase family. FabA subfamily. In terms of assembly, homodimer.

The protein resides in the cytoplasm. The enzyme catalyses a (3R)-hydroxyacyl-[ACP] = a (2E)-enoyl-[ACP] + H2O. It catalyses the reaction (3R)-hydroxydecanoyl-[ACP] = (2E)-decenoyl-[ACP] + H2O. The catalysed reaction is (2E)-decenoyl-[ACP] = (3Z)-decenoyl-[ACP]. It participates in lipid metabolism; fatty acid biosynthesis. Functionally, necessary for the introduction of cis unsaturation into fatty acids. Catalyzes the dehydration of (3R)-3-hydroxydecanoyl-ACP to E-(2)-decenoyl-ACP and then its isomerization to Z-(3)-decenoyl-ACP. Can catalyze the dehydratase reaction for beta-hydroxyacyl-ACPs with saturated chain lengths up to 16:0, being most active on intermediate chain length. The chain is 3-hydroxydecanoyl-[acyl-carrier-protein] dehydratase from Rhizobium rhizogenes (strain K84 / ATCC BAA-868) (Agrobacterium radiobacter).